Here is a 262-residue protein sequence, read N- to C-terminus: MAALSCLLDSVRRDIKKVDRELRQLRCIDEFSTRCLCDLYMHPYCCCDLHPYPYCLCYSKRSRSCGLCDLYPCCLCDVKLYCLRPSLRSLERKAIRAIEDEKRELAKLRRTTNRILASSCCSSNILGSVNVCGFEPDQVKVRVKDGKVCVSAERENRYDCLGSKKYSYMNICKEFSLPPCVDEKDVTYSYGLGSCVKIESPCYPCTSPCNPCNPCSPCNPCNPCNPCNPCSPCSPCSPCNPCDPCNPCYPCGSRFSCRKMIL.

A phosphoserine mark is found at Ser5 and Ser10. Repeat unit 1 spans residues 34 to 38 (RCLCD). A 2 X 5 AA repeats of [RC]-C-L-C-D region spans residues 34-77 (RCLCDLYMHPYCCCDLHPYPYCLCYSKRSRSCGLCDLYPCCLCD). Ser64 is modified (phosphoserine). Residues 73-77 (CCLCD) form repeat 2. Ser86, Ser122, Ser123, Ser151, Ser167, Ser189, and Ser194 each carry phosphoserine. The tract at residues 209-250 (CNPCNPCSPCNPCNPCNPCNPCSPCSPCSPCNPCDPCNPCYP) is C-X-P repeat region.

As to quaternary structure, interacts (via leucine zipper motif) with TCP11. Interacts with SPAG4. Interacts with KLC3. Interacts with CCDC42.

The protein localises to the cell projection. Its subcellular location is the cilium. The protein resides in the flagellum. It is found in the cytoplasm. It localises to the cytoskeleton. The protein localises to the microtubule organizing center. Its subcellular location is the centrosome. Component of the outer dense fibers (ODF) of spermatozoa. ODF are filamentous structures located on the outside of the axoneme in the midpiece and principal piece of the mammalian sperm tail and may help to maintain the passive elastic structures and elastic recoil of the sperm tail. This is Outer dense fiber protein 1 (ODF1) from Sus scrofa (Pig).